Here is a 501-residue protein sequence, read N- to C-terminus: 2,3-bisphosphoglycerate-independent phosphoglycerate mutase (501 aa).

Residues D12 and S62 each coordinate Mn(2+). S62 serves as the catalytic Phosphoserine intermediate. Residues H121, 150–151 (RD), R182, R188, 253–256 (RSDR), and K322 contribute to the substrate site. Residues D389, H393, D430, H431, and H449 each coordinate Mn(2+).

It belongs to the BPG-independent phosphoglycerate mutase family. In terms of assembly, monomer. Requires Mn(2+) as cofactor.

The enzyme catalyses (2R)-2-phosphoglycerate = (2R)-3-phosphoglycerate. It functions in the pathway carbohydrate degradation; glycolysis; pyruvate from D-glyceraldehyde 3-phosphate: step 3/5. Functionally, catalyzes the interconversion of 2-phosphoglycerate and 3-phosphoglycerate. This chain is 2,3-bisphosphoglycerate-independent phosphoglycerate mutase, found in Ehrlichia ruminantium (strain Gardel).